The sequence spans 181 residues: MIRAVLLGLRAVVFDREAARRLYASGYYGKPLGIPKPRGSNFDAPLELGLLETLHLLERGMLEVYDEEGHRVSVEEVRRRAERFIPKFELLYKVYRDLRDRGYVVRSGLKYGSDFAVYERGPGLEHAPYLVHVMRVDEEIDPLEIVRAGRLSHSVRKAFILALTGPRDTPIRYLLLKWSKP.

Active-site residues include Y118, H126, and K157.

It belongs to the tRNA-intron endonuclease family. Archaeal short subfamily. As to quaternary structure, homotetramer; although the tetramer contains four active sites, only two participate in the cleavage. Therefore, it should be considered as a dimer of dimers.

It carries out the reaction pretRNA = a 3'-half-tRNA molecule with a 5'-OH end + a 5'-half-tRNA molecule with a 2',3'-cyclic phosphate end + an intron with a 2',3'-cyclic phosphate and a 5'-hydroxyl terminus.. Endonuclease that removes tRNA introns. Cleaves pre-tRNA at the 5'- and 3'-splice sites to release the intron. The products are an intron and two tRNA half-molecules bearing 2',3' cyclic phosphate and 5'-OH termini. Recognizes a pseudosymmetric substrate in which 2 bulged loops of 3 bases are separated by a stem of 4 bp. In Hyperthermus butylicus (strain DSM 5456 / JCM 9403 / PLM1-5), this protein is tRNA-splicing endonuclease.